Here is an 852-residue protein sequence, read N- to C-terminus: Envelope glycoprotein gp160 (852 aa).

Residues 1-32 form the signal peptide; it reads MRVKGIKKNYQHLWRWGGMMLLGILMICSATD. The Extracellular segment spans residues 33–680; it reads KLWVTVYYGV…ITNWLWYIKI (648 aa). A glycan (N-linked (GlcNAc...) asparagine; by host) is linked at Asn-49. Cys-54 and Cys-74 are disulfide-bonded. 16 N-linked (GlcNAc...) asparagine; by host glycosylation sites follow: Asn-88, Asn-135, Asn-138, Asn-154, Asn-158, Asn-197, Asn-234, Asn-241, Asn-262, Asn-276, Asn-289, Asn-295, Asn-301, Asn-331, Asn-354, and Asn-360. Disulfide bonds link Cys-119/Cys-205, Cys-126/Cys-196, Cys-131/Cys-155, Cys-218/Cys-247, and Cys-228/Cys-239. Positions 131-154 are V1; sequence CHDFNATNATSNSGKMMEGGEMKN. The tract at residues 155–196 is V2; sequence CSFNITTSIRDKMQKEYALFYKLDIVPIDNDKTNTRYRLISC. The segment at 296–329 is V3; it reads CTRPNNNTRKRITMGPGRVYYTTGQIIGDIRRAH. An intrachain disulfide couples Cys-296 to Cys-330. Residues 362 to 372 form a CD4-binding loop region; sequence SSGGDPEIVMH. Intrachain disulfides connect Cys-376–Cys-439 and Cys-383–Cys-412. A V4 region spans residues 383–412; it reads CNTTQLFNSTWYRNTTGNITEGNSPITLPC. N-linked (GlcNAc...) asparagine; by host glycans are attached at residues Asn-384, Asn-390, Asn-396, Asn-400, Asn-442, and Asn-456. V5 stretches follow at residues 454–467 and 457–467; these read NNNE…FRPG and ETTDTEIFRPG. The tract at residues 508–528 is fusion peptide; the sequence is AVGLGALFLGFLGAAGSTMGA. An immunosuppression region spans residues 570–588; the sequence is KQLQARVLAVERYLKDQQL. A disulfide bond links Cys-594 and Cys-600. N-linked (GlcNAc...) asparagine; by host glycosylation is found at Asn-607, Asn-612, Asn-621, Asn-633, and Asn-670. A coiled-coil region spans residues 629-663; that stretch reads REIDNYTNLIYSLIEDSQIQQEKNEKELLELDKWA. Residues 658–679 form an MPER; binding to GalCer region; it reads ELDKWASLWNWFNITNWLWYIK. A helical transmembrane segment spans residues 681–701; that stretch reads FIMIVGGLIGLRIVFAVLSIV. The Cytoplasmic segment spans residues 702-852; the sequence is NRVRQGYSPL…IRQGLERALQ (151 aa). The YXXL motif; contains endocytosis signal motif lies at 708–711; sequence YSPL. Residues 715–741 form a disordered region; sequence TRLPGRRGPDRPEGIEEEGGERDRDRS.

It belongs to the HIV-1 env protein family. As to quaternary structure, the mature envelope protein (Env) consists of a homotrimer of non-covalently associated gp120-gp41 heterodimers. The resulting complex protrudes from the virus surface as a spike. There seems to be as few as 10 spikes on the average virion. Interacts with host CD4, CCR5 and CXCR4. Gp120 also interacts with the C-type lectins CD209/DC-SIGN and CLEC4M/DC-SIGNR (collectively referred to as DC-SIGN(R)). Gp120 and gp41 interact with GalCer. Gp120 interacts with host ITGA4/ITGB7 complex; on CD4+ T-cells, this interaction results in rapid activation of integrin ITGAL/LFA-1, which facilitates efficient cell-to-cell spreading of HIV-1. Gp120 interacts with cell-associated heparan sulfate; this interaction increases virus infectivity on permissive cells and may be involved in infection of CD4- cells. The mature envelope protein (Env) consists of a homotrimer of non-covalently associated gp120-gp41 heterodimers. The resulting complex protrudes from the virus surface as a spike. There seems to be as few as 10 spikes on the average virion. Post-translationally, highly glycosylated by host. The high number of glycan on the protein is reffered to as 'glycan shield' because it contributes to hide protein sequence from adaptive immune system. Palmitoylation of the transmembrane protein and of Env polyprotein (prior to its proteolytic cleavage) is essential for their association with host cell membrane lipid rafts. Palmitoylation is therefore required for envelope trafficking to classical lipid rafts, but not for viral replication. In terms of processing, specific enzymatic cleavages in vivo yield mature proteins. Envelope glycoproteins are synthesized as an inactive precursor that is heavily N-glycosylated and processed likely by host cell furin in the Golgi to yield the mature SU and TM proteins. The cleavage site between SU and TM requires the minimal sequence [KR]-X-[KR]-R. About 2 of the 9 disulfide bonds of gp41 are reduced by P4HB/PDI, following binding to CD4 receptor.

The protein localises to the virion membrane. The protein resides in the host cell membrane. It localises to the host endosome membrane. Oligomerizes in the host endoplasmic reticulum into predominantly trimers. In a second time, gp160 transits in the host Golgi, where glycosylation is completed. The precursor is then proteolytically cleaved in the trans-Golgi and thereby activated by cellular furin or furin-like proteases to produce gp120 and gp41. Functionally, attaches the virus to the host lymphoid cell by binding to the primary receptor CD4. This interaction induces a structural rearrangement creating a high affinity binding site for a chemokine coreceptor like CXCR4 and/or CCR5. Acts as a ligand for CD209/DC-SIGN and CLEC4M/DC-SIGNR, which are respectively found on dendritic cells (DCs), and on endothelial cells of liver sinusoids and lymph node sinuses. These interactions allow capture of viral particles at mucosal surfaces by these cells and subsequent transmission to permissive cells. HIV subverts the migration properties of dendritic cells to gain access to CD4+ T-cells in lymph nodes. Virus transmission to permissive T-cells occurs either in trans (without DCs infection, through viral capture and transmission), or in cis (following DCs productive infection, through the usual CD4-gp120 interaction), thereby inducing a robust infection. In trans infection, bound virions remain infectious over days and it is proposed that they are not degraded, but protected in non-lysosomal acidic organelles within the DCs close to the cell membrane thus contributing to the viral infectious potential during DCs' migration from the periphery to the lymphoid tissues. On arrival at lymphoid tissues, intact virions recycle back to DCs' cell surface allowing virus transmission to CD4+ T-cells. In terms of biological role, acts as a class I viral fusion protein. Under the current model, the protein has at least 3 conformational states: pre-fusion native state, pre-hairpin intermediate state, and post-fusion hairpin state. During fusion of viral and target intracellular membranes, the coiled coil regions (heptad repeats) assume a trimer-of-hairpins structure, positioning the fusion peptide in close proximity to the C-terminal region of the ectodomain. The formation of this structure appears to drive apposition and subsequent fusion of viral and target cell membranes. Complete fusion occurs in host cell endosomes and is dynamin-dependent, however some lipid transfer might occur at the plasma membrane. The virus undergoes clathrin-dependent internalization long before endosomal fusion, thus minimizing the surface exposure of conserved viral epitopes during fusion and reducing the efficacy of inhibitors targeting these epitopes. Membranes fusion leads to delivery of the nucleocapsid into the cytoplasm. The protein is Envelope glycoprotein gp160 of Human immunodeficiency virus type 1 group M subtype B (isolate BRVA) (HIV-1).